We begin with the raw amino-acid sequence, 1017 residues long: Probable disease resistance protein RDL5 (1017 aa).

A coiled-coil region spans residues 25–52; sequence QGVEDQVTELKRDLNMLSSFLKDANAKK. One can recognise an NB-ARC domain in the interval 147–460; the sequence is KQREMRQKFS…AEGIFQPRHY (314 aa). 190-197 lines the ATP pocket; it reads GMGGLGKT. LRR repeat units follow at residues 602 to 627, 649 to 674, 675 to 699, 768 to 791, 792 to 819, 841 to 865, and 937 to 962; these read LIHLRYLSLEYAEVTHIPYSLGNLKL, MQELRYLALPSDMGRKTKLELSNLVK, LETLENFSTENSSLEDLCGMVRLST, PSHLTTLYLESCRLEEDPMPILEK, LLQLKELELGFESFSGKKMVCSSGGFPQ, MPLLRTLDIQVCRKLKQLPDEHLPS, and MPFLHTLYIDDCPKLKKLPDGLQFIY.

This sequence belongs to the disease resistance NB-LRR family.

In terms of biological role, potential disease resistance protein. This chain is Probable disease resistance protein RDL5 (RDL5), found in Arabidopsis thaliana (Mouse-ear cress).